Here is a 179-residue protein sequence, read N- to C-terminus: uncharacterized protein (179 aa).

This is an uncharacterized protein from Methanocaldococcus jannaschii (strain ATCC 43067 / DSM 2661 / JAL-1 / JCM 10045 / NBRC 100440) (Methanococcus jannaschii).